An 838-amino-acid polypeptide reads, in one-letter code: V-type proton ATPase 116 kDa subunit a 1 (838 aa).

Residues 1 to 388 lie on the Cytoplasmic side of the membrane; it reads MGELFRSEEM…DAYGIGTYRE (388 aa). A phosphothreonine mark is found at threonine 250 and threonine 360. At tyrosine 364 the chain carries Phosphotyrosine. A helical membrane pass occupies residues 389-407; the sequence is INPAPYTVITFPFLFAVMF. Residues 408-409 lie on the Vacuolar side of the membrane; that stretch reads GD. The helical transmembrane segment at 410–426 threads the bilayer; that stretch reads FGHGILMTLFAVWMVLR. The Cytoplasmic portion of the chain corresponds to 427-441; the sequence is ESRILSQKNENEMFS. Residues 442–471 traverse the membrane as a helical segment; it reads MVFSGRYIILLMGLFSIYTGLIYNDCFSKS. Residues 472–535 lie on the Vacuolar side of the membrane; that stretch reads LNIFGSSWSV…ATNKLTFLNS (64 aa). The chain crosses the membrane as a helical span at residues 536-555; it reads FKMKMSVILGIIHMLFGVSL. The Cytoplasmic portion of the chain corresponds to 556-573; the sequence is SLFNHIYFKKPLNIYFGF. The helical transmembrane segment at 574–594 threads the bilayer; sequence IPEIIFMSSLFGYLVILIFYK. At 595–639 the chain is on the vacuolar side; that stretch reads WTAYDAHSSRNAPSLLIHFINMFLFSYPESGNAMLYSGQKGIQCF. The helical transmembrane segment at 640-659 threads the bilayer; the sequence is LIVVAMLCVPWMLLFKPLIL. The Cytoplasmic segment spans residues 660-725; the sequence is RHQYLRKKHL…DTMVHQAIHT (66 aa). Residues 726–750 form a helical membrane-spanning segment; it reads IEYCLGCISNTASYLRLWALSLAHA. Topologically, residues 751-771 are vacuolar; the sequence is QLSEVLWTMVIHIGLHVRSLA. Residues 772–810 traverse the membrane as a helical segment; the sequence is GGLGLFFIFAAFATLTVAILLIMEGLSAFLHALRLHWVE. Residues 811 to 838 are Cytoplasmic-facing; sequence FQNKFYTGTGFKFLPFSFEHIREGKFDE.

Belongs to the V-ATPase 116 kDa subunit family. V-ATPase is a heteromultimeric enzyme made up of two complexes: the ATP-hydrolytic V1 complex and the proton translocation V0 complex. The V1 complex consists of three catalytic AB heterodimers that form a heterohexamer, three peripheral stalks each consisting of EG heterodimers, one central rotor including subunits D and F, and the regulatory subunits C and H. The proton translocation complex V0 consists of the proton transport subunit a, a ring of proteolipid subunits c9c'', rotary subunit d, subunits e and f, and the accessory subunits ATP6AP1/Ac45 and ATP6AP2/PRR. Interacts with SPAAR. As to expression, expressed in brain (at protein level). In terms of tissue distribution, expressed in heart, kidney, liver, spleen, and to a lesser extent in brain.

Its subcellular location is the cytoplasmic vesicle. The protein localises to the clathrin-coated vesicle membrane. It localises to the secretory vesicle. The protein resides in the synaptic vesicle membrane. It is found in the melanosome. In terms of biological role, subunit of the V0 complex of vacuolar(H+)-ATPase (V-ATPase), a multisubunit enzyme composed of a peripheral complex (V1) that hydrolyzes ATP and a membrane integral complex (V0) that translocates protons. V-ATPase is responsible for the acidification of various organelles, such as lysosomes, endosomes, the trans-Golgi network, and secretory granules, including synaptic vesicles. In certain cell types, can be exported to the plasma membrane, where it is involved in the acidification of the extracellular environment. Required for assembly and activity of the vacuolar ATPase. Through its action on compartment acidification, plays an essential role in neuronal development in terms of integrity and connectivity of neurons. The protein is V-type proton ATPase 116 kDa subunit a 1 (Atp6v0a1) of Rattus norvegicus (Rat).